Here is a 373-residue protein sequence, read N- to C-terminus: Putative 8-amino-7-oxononanoate synthase (373 aa).

R18 is a substrate binding site. 93 to 94 (GF) contacts pyridoxal 5'-phosphate. Position 118 (H118) interacts with substrate. Pyridoxal 5'-phosphate-binding positions include S166, 191–194 (DEAH), and 220–223 (TLSK). Residue K223 is modified to N6-(pyridoxal phosphate)lysine. T337 contacts substrate.

This sequence belongs to the class-II pyridoxal-phosphate-dependent aminotransferase family. BioF subfamily. As to quaternary structure, homodimer. Pyridoxal 5'-phosphate is required as a cofactor.

It catalyses the reaction 6-carboxyhexanoyl-[ACP] + L-alanine + H(+) = (8S)-8-amino-7-oxononanoate + holo-[ACP] + CO2. It participates in cofactor biosynthesis; biotin biosynthesis. Functionally, catalyzes the decarboxylative condensation of pimeloyl-[acyl-carrier protein] and L-alanine to produce 8-amino-7-oxononanoate (AON), [acyl-carrier protein], and carbon dioxide. This is Putative 8-amino-7-oxononanoate synthase (bioF) from Aquifex aeolicus (strain VF5).